The chain runs to 97 residues: ATP-dependent Clp protease adapter protein ClpS (97 aa).

The protein belongs to the ClpS family. Binds to the N-terminal domain of the chaperone ClpA.

Involved in the modulation of the specificity of the ClpAP-mediated ATP-dependent protein degradation. This Nautilia profundicola (strain ATCC BAA-1463 / DSM 18972 / AmH) protein is ATP-dependent Clp protease adapter protein ClpS.